The primary structure comprises 111 residues: Large ribosomal subunit protein uL22 (111 aa).

Belongs to the universal ribosomal protein uL22 family. Part of the 50S ribosomal subunit.

Its function is as follows. This protein binds specifically to 23S rRNA; its binding is stimulated by other ribosomal proteins, e.g. L4, L17, and L20. It is important during the early stages of 50S assembly. It makes multiple contacts with different domains of the 23S rRNA in the assembled 50S subunit and ribosome. The globular domain of the protein is located near the polypeptide exit tunnel on the outside of the subunit, while an extended beta-hairpin is found that lines the wall of the exit tunnel in the center of the 70S ribosome. This Chlamydia muridarum (strain MoPn / Nigg) protein is Large ribosomal subunit protein uL22.